We begin with the raw amino-acid sequence, 100 residues long: Urease subunit gamma (100 aa).

This sequence belongs to the urease gamma subunit family. In terms of assembly, heterotrimer of UreA (gamma), UreB (beta) and UreC (alpha) subunits. Three heterotrimers associate to form the active enzyme.

Its subcellular location is the cytoplasm. The enzyme catalyses urea + 2 H2O + H(+) = hydrogencarbonate + 2 NH4(+). It functions in the pathway nitrogen metabolism; urea degradation; CO(2) and NH(3) from urea (urease route): step 1/1. The sequence is that of Urease subunit gamma from Acinetobacter baumannii (strain AB307-0294).